The primary structure comprises 608 residues: DNA mismatch repair protein MutL (608 aa).

Belongs to the DNA mismatch repair MutL/HexB family.

Its function is as follows. This protein is involved in the repair of mismatches in DNA. It is required for dam-dependent methyl-directed DNA mismatch repair. May act as a 'molecular matchmaker', a protein that promotes the formation of a stable complex between two or more DNA-binding proteins in an ATP-dependent manner without itself being part of a final effector complex. This is DNA mismatch repair protein MutL from Elusimicrobium minutum (strain Pei191).